Reading from the N-terminus, the 90-residue chain is DNA-directed RNA polymerase subunit omega (90 aa).

Residues 69 to 90 (RQEQQEQEAAELAAVSSIAHNR) are disordered.

It belongs to the RNA polymerase subunit omega family. As to quaternary structure, the RNAP catalytic core consists of 2 alpha, 1 beta, 1 beta' and 1 omega subunit. When a sigma factor is associated with the core the holoenzyme is formed, which can initiate transcription.

The catalysed reaction is RNA(n) + a ribonucleoside 5'-triphosphate = RNA(n+1) + diphosphate. Functionally, promotes RNA polymerase assembly. Latches the N- and C-terminal regions of the beta' subunit thereby facilitating its interaction with the beta and alpha subunits. In Vibrio parahaemolyticus serotype O3:K6 (strain RIMD 2210633), this protein is DNA-directed RNA polymerase subunit omega.